We begin with the raw amino-acid sequence, 94 residues long: Protein LURE 1.1 (94 aa).

The first 19 residues, 1-19, serve as a signal peptide directing secretion; the sequence is MKLIFIFLTLLIFVSSCTS. 3 disulfides stabilise this stretch: cysteine 58–cysteine 75, cysteine 61–cysteine 82, and cysteine 65–cysteine 84. The interval 67–87 is PRK6 binding; sequence RRDRYIRTCSFERKLCRCSYS.

Belongs to the DEFL family. In terms of assembly, binds to PRK6 LRRs. Expressed in the pistil. Detected exclusively in the synergid cells.

It is found in the secreted. Its function is as follows. Pollen tube attractants guiding pollen tubes to the ovular micropyle. The chain is Protein LURE 1.1 from Arabidopsis thaliana (Mouse-ear cress).